A 99-amino-acid chain; its full sequence is Aspartyl/glutamyl-tRNA(Asn/Gln) amidotransferase subunit C (99 aa).

It belongs to the GatC family. As to quaternary structure, heterotrimer of A, B and C subunits.

It carries out the reaction L-glutamyl-tRNA(Gln) + L-glutamine + ATP + H2O = L-glutaminyl-tRNA(Gln) + L-glutamate + ADP + phosphate + H(+). The enzyme catalyses L-aspartyl-tRNA(Asn) + L-glutamine + ATP + H2O = L-asparaginyl-tRNA(Asn) + L-glutamate + ADP + phosphate + 2 H(+). Allows the formation of correctly charged Asn-tRNA(Asn) or Gln-tRNA(Gln) through the transamidation of misacylated Asp-tRNA(Asn) or Glu-tRNA(Gln) in organisms which lack either or both of asparaginyl-tRNA or glutaminyl-tRNA synthetases. The reaction takes place in the presence of glutamine and ATP through an activated phospho-Asp-tRNA(Asn) or phospho-Glu-tRNA(Gln). This chain is Aspartyl/glutamyl-tRNA(Asn/Gln) amidotransferase subunit C, found in Kineococcus radiotolerans (strain ATCC BAA-149 / DSM 14245 / SRS30216).